A 242-amino-acid polypeptide reads, in one-letter code: Protein HTATIP2 (242 aa).

Residue A2 is modified to N-acetylalanine. Residues 2–25 (AETEALSKLREDFRMQNKSVFILG) form a required for interaction with elongation factor EEF1A1 region. NADPH contacts are provided by S27, G28, E29, T30, R52, R53, L92, G93, Y143, K147, and R178. Y143 functions as the Proton acceptor in the catalytic mechanism. K147 is a catalytic residue.

In terms of assembly, monomer. Forms homodimers during oxidative stress. Interacts (via N-terminus) with elongation factor EEF1A1 (via middle-region); the interaction is direct and competes with EEF1A1 binding to guanyl-nucleotide exchange factor EEF1B2, thereby inhibiting GDP for GTP exchange and reactivation of EEF1A1. Interacts with nuclear transport receptors XPO4, IPO5/RANBP5, IPO7, IPO9 and KPNB1 as well as GCN1L1/GCN1 and LRPPRC probably through their HEAT repeats. Binds NCOA5/CIA.

It localises to the cytoplasm. Represses translation by preventing reactivation of elongation factor eEF1A. May also inhibit nuclear import by competing with nuclear import substrates for binding to a subset of nuclear transport receptors. Has additionally been proposed to act as a redox sensor involved in cellular oxidative stress surveillance. This Pan paniscus (Pygmy chimpanzee) protein is Protein HTATIP2 (HTATIP2).